We begin with the raw amino-acid sequence, 595 residues long: Elongation factor 4 (595 aa).

In terms of domain architecture, tr-type G spans 2–184 (ETIRNFSIIA…TITHNIPYPK (183 aa)). Residues 14–19 (DHGKST) and 131–134 (NKID) contribute to the GTP site.

Belongs to the TRAFAC class translation factor GTPase superfamily. Classic translation factor GTPase family. LepA subfamily.

The protein resides in the cell membrane. The catalysed reaction is GTP + H2O = GDP + phosphate + H(+). Functionally, required for accurate and efficient protein synthesis under certain stress conditions. May act as a fidelity factor of the translation reaction, by catalyzing a one-codon backward translocation of tRNAs on improperly translocated ribosomes. Back-translocation proceeds from a post-translocation (POST) complex to a pre-translocation (PRE) complex, thus giving elongation factor G a second chance to translocate the tRNAs correctly. Binds to ribosomes in a GTP-dependent manner. In Buchnera aphidicola subsp. Baizongia pistaciae (strain Bp), this protein is Elongation factor 4.